A 200-amino-acid chain; its full sequence is Protein GrpE (200 aa).

It belongs to the GrpE family. As to quaternary structure, homodimer.

It localises to the cytoplasm. Its function is as follows. Participates actively in the response to hyperosmotic and heat shock by preventing the aggregation of stress-denatured proteins, in association with DnaK and GrpE. It is the nucleotide exchange factor for DnaK and may function as a thermosensor. Unfolded proteins bind initially to DnaJ; upon interaction with the DnaJ-bound protein, DnaK hydrolyzes its bound ATP, resulting in the formation of a stable complex. GrpE releases ADP from DnaK; ATP binding to DnaK triggers the release of the substrate protein, thus completing the reaction cycle. Several rounds of ATP-dependent interactions between DnaJ, DnaK and GrpE are required for fully efficient folding. The protein is Protein GrpE of Geobacter sulfurreducens (strain ATCC 51573 / DSM 12127 / PCA).